A 272-amino-acid polypeptide reads, in one-letter code: 2-dehydro-3-deoxyphosphooctonate aldolase (272 aa).

It belongs to the KdsA family.

The protein localises to the cytoplasm. It carries out the reaction D-arabinose 5-phosphate + phosphoenolpyruvate + H2O = 3-deoxy-alpha-D-manno-2-octulosonate-8-phosphate + phosphate. It participates in carbohydrate biosynthesis; 3-deoxy-D-manno-octulosonate biosynthesis; 3-deoxy-D-manno-octulosonate from D-ribulose 5-phosphate: step 2/3. The protein operates within bacterial outer membrane biogenesis; lipopolysaccharide biosynthesis. The chain is 2-dehydro-3-deoxyphosphooctonate aldolase from Trichlorobacter lovleyi (strain ATCC BAA-1151 / DSM 17278 / SZ) (Geobacter lovleyi).